A 156-amino-acid polypeptide reads, in one-letter code: Phosphopantetheine adenylyltransferase (156 aa).

The protein belongs to the eukaryotic CoaD family.

The protein localises to the cytoplasm. It catalyses the reaction (R)-4'-phosphopantetheine + ATP + H(+) = 3'-dephospho-CoA + diphosphate. It functions in the pathway cofactor biosynthesis; coenzyme A biosynthesis. Functionally, reversibly transfers an adenylyl group from ATP to 4'-phosphopantetheine, yielding dephospho-CoA (dPCoA) and pyrophosphate. The polypeptide is Phosphopantetheine adenylyltransferase (Methanosarcina acetivorans (strain ATCC 35395 / DSM 2834 / JCM 12185 / C2A)).